Here is a 238-residue protein sequence, read N- to C-terminus: MTEEVILKVGLTPKHQCSYLGHEQEQLLVLMDHNLLNASGYERLLTAGFRRSGNDIYRPHCPACSACQSLRIHSERFVPSRSQKRIRQLNQDLELVLSYDDKPEYYQLYERYIRERHHDGSMYPPSRTQYKGFLHCDWMPPLYLEMRKDNRLIGVATTDLLPHSLSAMYTFFDPAHADRSLGTFAILSQLDLAKRTGRTWLYLGYLVEACRKMNYKRQYLPHERLIQGEWKNIDTKPE.

Belongs to the R-transferase family. Bpt subfamily.

It localises to the cytoplasm. It catalyses the reaction N-terminal L-glutamyl-[protein] + L-leucyl-tRNA(Leu) = N-terminal L-leucyl-L-glutamyl-[protein] + tRNA(Leu) + H(+). It carries out the reaction N-terminal L-aspartyl-[protein] + L-leucyl-tRNA(Leu) = N-terminal L-leucyl-L-aspartyl-[protein] + tRNA(Leu) + H(+). In terms of biological role, functions in the N-end rule pathway of protein degradation where it conjugates Leu from its aminoacyl-tRNA to the N-termini of proteins containing an N-terminal aspartate or glutamate. This is Aspartate/glutamate leucyltransferase from Aeromonas salmonicida (strain A449).